A 117-amino-acid polypeptide reads, in one-letter code: NADH-ubiquinone oxidoreductase chain 3 (117 aa).

3 consecutive transmembrane segments (helical) span residues 5-25, 57-77, and 86-106; these read ALSSAIALLVPIIILGAAWVL, FFLLAIIFIVFDIEIVLLMPL, and VFTTVTTSVLFLMILLIGLIH.

This sequence belongs to the complex I subunit 3 family.

The protein resides in the mitochondrion membrane. The catalysed reaction is a ubiquinone + NADH + 5 H(+)(in) = a ubiquinol + NAD(+) + 4 H(+)(out). Functionally, core subunit of the mitochondrial membrane respiratory chain NADH dehydrogenase (Complex I) that is believed to belong to the minimal assembly required for catalysis. Complex I functions in the transfer of electrons from NADH to the respiratory chain. The immediate electron acceptor for the enzyme is believed to be ubiquinone. This Lumbricus terrestris (Common earthworm) protein is NADH-ubiquinone oxidoreductase chain 3 (ND3).